Here is a 595-residue protein sequence, read N- to C-terminus: E3 ubiquitin-protein ligase synoviolin B (595 aa).

Residues 1–19 (MTGASLALTASVVAHAYYL) form a helical membrane-spanning segment. The Lumenal portion of the chain corresponds to 20-35 (KNQFYPTVVYLTKSSP). A helical transmembrane segment spans residues 36 to 56 (SMAILYIQAFVLVFLLGKFMG). Residues 57-92 (KVFFGQLRAAEMEHLLERSWYAVTETCLAFTVFRDD) are Cytoplasmic-facing. The chain crosses the membrane as a helical span at residues 93-113 (FSPRFVALFTLLLFLKCFHWL). Over 114–129 (AEDRVDFMERSPNISW) the chain is Lumenal. A helical membrane pass occupies residues 130 to 150 (LFHFRILALMLLLGVLDAFFV). Residues 151–163 (SHAYNSLVTRGAS) are Cytoplasmic-facing. The chain crosses the membrane as a helical span at residues 164-184 (VQLVFGFEYAILMTMILAVFI). Topologically, residues 185 to 218 (KYILHSVDLQSENPWDNKAVYMLYTELFTGFIKV) are lumenal. Residues 219 to 239 (LLYMAFMTIMVKVHTFPLFAI) traverse the membrane as a helical segment. Positions 230 to 264 (KVHTFPLFAIRPMYLAMRQFKKAVTDAVMSRRAIR) are interaction with p53/TP53. At 240–595 (RPMYLAMRQF…LQKLETTDSQ (356 aa)) the chain is on the cytoplasmic side. Residues Cys285, Cys288, Cys301, His303, His306, Cys309, Cys320, and Cys323 each contribute to the Zn(2+) site. Residues 285-324 (CIICREEMVSGAKRLPCNHIFHTSCLRSWFQRQQTCPTCR) form an RING-type; atypical zinc finger. Over residues 335 to 353 (QPQTPAEQQNQHQAQQQPT) the composition is skewed to low complexity. Disordered regions lie at residues 335–370 (QPQT…LPPF) and 386–426 (PVPG…PGAA). A compositionally biased stretch (pro residues) spans 354 to 370 (PVVPPQPNFPPGMLPPF). Low complexity predominate over residues 390–408 (APVGNPPDEANPGSSSGSS). A coiled-coil region spans residues 463–494 (EELRAMEGHERQNLEARLQCLQNIHTLLDAAM). The segment at 509-595 (PPQPPVSSSS…LQKLETTDSQ (87 aa)) is disordered. Positions 514–552 (VSSSSSSSASASTEPTTSSVSEPVIDTSSIVTTDSSQQS) are enriched in low complexity.

Belongs to the HRD1 family. As to quaternary structure, homodimer.

Its subcellular location is the endoplasmic reticulum membrane. It catalyses the reaction S-ubiquitinyl-[E2 ubiquitin-conjugating enzyme]-L-cysteine + [acceptor protein]-L-lysine = [E2 ubiquitin-conjugating enzyme]-L-cysteine + N(6)-ubiquitinyl-[acceptor protein]-L-lysine.. It functions in the pathway protein modification; protein ubiquitination. Functionally, E3 ubiquitin-protein ligase which accepts ubiquitin specifically from endoplasmic reticulum-associated UBC7 E2 ligase and transfers it to substrates, promoting their degradation. Component of the endoplasmic reticulum quality control (ERQC) system also called ER-associated degradation (ERAD) involved in ubiquitin-dependent degradation of misfolded endoplasmic reticulum proteins. Also promotes the degradation of normal but naturally short-lived proteins. Protects cells from ER stress-induced apoptosis. Sequesters p53 in the cytoplasm and promotes its degradation, thereby negatively regulating its biological function in transcription, cell cycle regulation and apoptosis. The chain is E3 ubiquitin-protein ligase synoviolin B (syvn1-b) from Xenopus laevis (African clawed frog).